Here is a 1284-residue protein sequence, read N- to C-terminus: Zinc finger protein 423 (1284 aa).

Disordered regions lie at residues 1 to 64 (MHKK…MEDE) and 87 to 117 (AHRCPGDGDDDPQLSWVASSPSSKDVASPTQ). Over residues 34–46 (CDQKTSRALEDRN) the composition is skewed to basic and acidic residues. Phosphoserine occurs at positions 47 and 50. Acidic residues predominate over residues 54–64 (RNEDDEDMEDE). A C2H2-type 1; degenerate zinc finger spans residues 67–93 (YTCDHCQQDFESLADLTDHRAHRCPGD). Polar residues predominate over residues 102-117 (WVASSPSSKDVASPTQ). 7 consecutive C2H2-type zinc fingers follow at residues 138 to 160 (YPCQFCDKSFIRLSYLKRHEQIH), 166 to 188 (FKCTYCSRLFKHKRSRDRHIKLH), 194 to 216 (YHCHECEAAFSRSDHLKIHLKTH), 222 to 244 (FKCTVCKRGFSSTSSLQSHMQAH), 263 to 286 (FMCDYCEDTFSQTEELEKHVLTRH), 295 to 318 (LQCIHCPEVFVDENTLLAHIHQAH), and 323 to 345 (HKCPMCPEQFSSVEGVYCHLDSH). The interval 346 to 398 (RQPDSSNHSVSPDPVLGSVASMSSATPDSSASVERGSTPDSTLKPLRGQKKMR) is disordered. Over residues 363–377 (SVASMSSATPDSSAS) the composition is skewed to low complexity. The C2H2-type 9; degenerate zinc finger occupies 409 to 433 (YSCPYCSKRDFNSLAVLEIHLKTIH). 3 C2H2-type zinc fingers span residues 441-464 (HTCQICLDSMPTLYNLNEHVRKLH), 480-503 (FHCNYCPEMFADINSLQEHIRVSH), and 517-540 (FFCNQCSMGFLTESSLTEHIQQAH). The C2H2-type 13; atypical zinc-finger motif lies at 563–588 (YSCPYCTNSPIFGSILKLTKHIKENH). The disordered stretch occupies residues 590–624 (NIPLAHSKKSKAEQSPVSSDVEVSSPKRQRLSASA). Serine 604 bears the Phosphoserine mark. Positions 604–615 (SPVSSDVEVSSP) are enriched in low complexity. 7 consecutive C2H2-type zinc fingers follow at residues 632-654 (YPCNQCDLKFSNFESFQTHLKLH), 662-684 (QACPQCKEDFDSQESLLQHLTVH), 692-715 (YVCESCDKQFSSVDDLQKHLLDMH), 720-743 (YHCTLCQEVFDSKVSIQVHLAVKH), 750-773 (YRCTACNWDFRKEADLQVHVKHSH), 781-803 (HKCIFCGETFSTEVELQCHITTH), and 807-830 (YNCKFCSKAFHAIILLEKHLREKH). A C2H2-type 21; degenerate zinc finger spans residues 886 to 908 (YGCDICGAAYTMEVLLQNHRLRD). C2H2-type zinc fingers lie at residues 930 to 952 (HKCNVCSRTFFSENGLREHLQTH), 959 to 981 (YMCPICGERFPSLLTLTEHKVTH), and 1020 to 1042 (FRCVVCMQTVTSTLELKIHGTFH). Serine 1054 is modified (phosphoserine). The C2H2-type 25; degenerate zinc finger occupies 1064–1082 (YKCALCLKEFRSKQDLVKL). 5 consecutive C2H2-type zinc fingers follow at residues 1120–1143 (LRCPECSVKFESAEDLESHMQVDH), 1168–1190 (YQCIKCQMTFENEREIQIHVANH), 1198–1220 (HECKLCNQMFDSPAKLLCHLIEH), 1229–1252 (FKCPVCFTVFVQANKLQQHIFAVH), and 1259–1282 (YDCSQCPQKFFFQTELQNHTMSQH). Residues 1136 to 1147 (ESHMQVDHRDLT) are compositionally biased toward basic and acidic residues. The tract at residues 1136–1163 (ESHMQVDHRDLTPETSGPRKGTQTSPVP) is disordered.

This sequence belongs to the krueppel C2H2-type zinc-finger protein family. Homodimer. Interacts with EBF1. Interacts with SMAD1 and SMAD4. Interacts with PARP1. Interacts with CEP290. Expressed in brain, lung, skeletal muscle, heart, pancreas and kidney but not liver or placenta. Also expressed in aorta, ovary, pituitary, small intestine, fetal brain, fetal kidney and, within the adult brain, in the substantia nigra, medulla, amygdala, thalamus and cerebellum.

It is found in the nucleus. In terms of biological role, transcription factor that can both act as an activator or a repressor depending on the context. Plays a central role in BMP signaling and olfactory neurogenesis. Associates with SMADs in response to BMP2 leading to activate transcription of BMP target genes. Acts as a transcriptional repressor via its interaction with EBF1, a transcription factor involved in terminal olfactory receptor neurons differentiation; this interaction preventing EBF1 to bind DNA and activate olfactory-specific genes. Involved in olfactory neurogenesis by participating in a developmental switch that regulates the transition from differentiation to maturation in olfactory receptor neurons. Controls proliferation and differentiation of neural precursors in cerebellar vermis formation. This is Zinc finger protein 423 (ZNF423) from Homo sapiens (Human).